The chain runs to 620 residues: Alkaline nuclease (620 aa).

Residues 1–10 (MAAAATPGAK) are compositionally biased toward low complexity. Disordered regions lie at residues 1–122 (MAAA…SASA) and 595–620 (ASRSPGRGPAAADTTSSPPTAGRSSR). Positions 11-23 (RPADPARDPDSPP) are enriched in basic and acidic residues. The segment covering 40–49 (RPAPPRPTSP) has biased composition (pro residues). A compositionally biased stretch (low complexity) spans 603–620 (PAAADTTSSPPTAGRSSR).

This sequence belongs to the herpesviridae alkaline nuclease family. Interacts with major DNA-binding protein; this interaction increases the nuclease processivity of the alkaline exonuclease.

The protein resides in the host nucleus. It is found in the host cytoplasm. Its function is as follows. Plays a role in processing non linear or branched viral DNA intermediates in order to promote the production of mature packaged unit-length linear progeny viral DNA molecules. Exhibits endonuclease and exonuclease activities and accepts both double-stranded and single-stranded DNA as substrate. Exonuclease digestion of DNA is in the 5'-&gt; 3' direction and the products are 5'-monophosphate nucleosides. Additionally, forms a recombinase with the major DNA-binding protein, which displays strand exchange activity. This Homo sapiens (Human) protein is Alkaline nuclease.